Here is a 176-residue protein sequence, read N- to C-terminus: RNA pyrophosphohydrolase (176 aa).

A Nudix hydrolase domain is found at 6 to 149 (GYRPNVGIVI…KRDVYRRVMK (144 aa)). The Nudix box motif lies at 38-59 (GGINPGESAEQAMYRELFEEVG).

It belongs to the Nudix hydrolase family. RppH subfamily. A divalent metal cation is required as a cofactor.

Accelerates the degradation of transcripts by removing pyrophosphate from the 5'-end of triphosphorylated RNA, leading to a more labile monophosphorylated state that can stimulate subsequent ribonuclease cleavage. The protein is RNA pyrophosphohydrolase of Salmonella arizonae (strain ATCC BAA-731 / CDC346-86 / RSK2980).